The following is a 101-amino-acid chain: A-type ATP synthase subunit K (101 aa).

Helical transmembrane passes span 5–25 (WLPF…AQAP), 37–57 (IGAG…VGMA), and 75–95 (ILIF…FAVL).

It belongs to the V-ATPase proteolipid subunit family. In terms of assembly, has multiple subunits with at least A(3), B(3), C, D, E, F, H, I and proteolipid K(x). In terms of processing, the N-terminus is blocked.

It is found in the cell membrane. In terms of biological role, component of the A-type ATP synthase that produces ATP from ADP in the presence of a proton gradient across the membrane. This is A-type ATP synthase subunit K from Sulfurisphaera tokodaii (strain DSM 16993 / JCM 10545 / NBRC 100140 / 7) (Sulfolobus tokodaii).